We begin with the raw amino-acid sequence, 281 residues long: Pantothenate synthetase (281 aa).

An ATP-binding site is contributed by 30 to 37; that stretch reads MGYLHEGH. Histidine 37 acts as the Proton donor in catalysis. Glutamine 61 provides a ligand contact to (R)-pantoate. Glutamine 61 contacts beta-alanine. ATP is bound at residue 147–150; that stretch reads GQKD. Glutamine 153 contacts (R)-pantoate. ATP contacts are provided by residues valine 176 and 184-187; that span reads MSSR.

The protein belongs to the pantothenate synthetase family. Homodimer.

The protein localises to the cytoplasm. It catalyses the reaction (R)-pantoate + beta-alanine + ATP = (R)-pantothenate + AMP + diphosphate + H(+). It functions in the pathway cofactor biosynthesis; (R)-pantothenate biosynthesis; (R)-pantothenate from (R)-pantoate and beta-alanine: step 1/1. Catalyzes the condensation of pantoate with beta-alanine in an ATP-dependent reaction via a pantoyl-adenylate intermediate. This is Pantothenate synthetase from Acetivibrio thermocellus (strain ATCC 27405 / DSM 1237 / JCM 9322 / NBRC 103400 / NCIMB 10682 / NRRL B-4536 / VPI 7372) (Clostridium thermocellum).